Here is a 375-residue protein sequence, read N- to C-terminus: Growth/differentiation factor 8 (375 aa).

Positions 1 to 18 (MQRLQICVYIYLFVLIVA) are cleaved as a signal peptide. The propeptide occupies 19–266 (GPVDLSENSE…VTDTPKRSRR (248 aa)). Asn-71 carries an N-linked (GlcNAc...) asparagine glycan. 3 disulfide bridges follow: Cys-281–Cys-340, Cys-309–Cys-372, and Cys-313–Cys-374.

Belongs to the TGF-beta family. In terms of assembly, homodimer; disulfide-linked. Interacts with WFIKKN2, leading to inhibit its activity. Interacts with FSTL3. Post-translationally, synthesized as large precursor molecule that undergoes proteolytic cleavage to generate an N-terminal propeptide and a disulfide linked C-terminal dimer, which is the biologically active molecule. The circulating form consists of a latent complex of the C-terminal dimer and other proteins, including its propeptide, which maintain the C-terminal dimer in a latent, inactive state. Ligand activation requires additional cleavage of the prodomain by a tolloid-like metalloproteinase.

The protein localises to the secreted. Its function is as follows. Acts specifically as a negative regulator of skeletal muscle growth. The chain is Growth/differentiation factor 8 (MSTN) from Vulpes vulpes (Red fox).